A 90-amino-acid chain; its full sequence is DNA-binding protein HU-beta (90 aa).

This sequence belongs to the bacterial histone-like protein family. As to quaternary structure, heterodimer of an alpha and a beta chain.

Its function is as follows. Histone-like DNA-binding protein which is capable of wrapping DNA to stabilize it, and thus to prevent its denaturation under extreme environmental conditions. This Pseudomonas fluorescens (strain ATCC BAA-477 / NRRL B-23932 / Pf-5) protein is DNA-binding protein HU-beta (hupB).